The primary structure comprises 220 residues: Fructose-6-phosphate aldolase (220 aa).

The Schiff-base intermediate with substrate role is filled by Lys-85.

Belongs to the transaldolase family. Type 3A subfamily. In terms of assembly, homodecamer.

It localises to the cytoplasm. It catalyses the reaction beta-D-fructose 6-phosphate = dihydroxyacetone + D-glyceraldehyde 3-phosphate. In terms of biological role, catalyzes the reversible formation of fructose 6-phosphate from dihydroxyacetone and D-glyceraldehyde 3-phosphate via an aldolization reaction. This chain is Fructose-6-phosphate aldolase, found in Salmonella typhi.